We begin with the raw amino-acid sequence, 143 residues long: Transcriptional regulator MraZ (143 aa).

SpoVT-AbrB domains lie at 5–47 and 76–119; these read TYTP…PKEE and ADEQ…DAQA.

It belongs to the MraZ family. As to quaternary structure, forms oligomers.

It localises to the cytoplasm. The protein resides in the nucleoid. This is Transcriptional regulator MraZ from Corynebacterium glutamicum (strain R).